The sequence spans 64 residues: MTQGKRKHPCDLKNPSKRAPPATCNKPNGAILCGDFCLHEGYNIGKCVMRRTGKACICSQCEGW.

A disordered region spans residues methionine 1–proline 21. Cystine bridges form between cysteine 10/cysteine 61, cysteine 24/cysteine 47, cysteine 33/cysteine 56, and cysteine 37/cysteine 58.

This sequence belongs to the DEFL family.

This chain is Defensin-like protein 41, found in Arabidopsis thaliana (Mouse-ear cress).